A 599-amino-acid chain; its full sequence is Kelch-like protein 41a (599 aa).

In terms of domain architecture, BTB spans 32–102 (VDCILKVGDR…LYSADIDITD (71 aa)). The 103-residue stretch at 137–239 (CLAIFRMGLV…PEKYLKEKVE (103 aa)) folds into the BACK domain. Kelch repeat units follow at residues 339-391 (LLYV…EFEN), 393-440 (LFAV…SQNG), 441-488 (LVYC…VHKG), 489-535 (KIVV…SVDG), and 537-591 (LYAV…SMRL).

Its subcellular location is the cytoplasm. The protein localises to the cytoskeleton. It localises to the sarcoplasmic reticulum membrane. It is found in the endoplasmic reticulum membrane. Its function is as follows. Involved in skeletal muscle development and differentiation. The polypeptide is Kelch-like protein 41a (klhl41a) (Danio rerio (Zebrafish)).